The primary structure comprises 298 residues: Biphenyl-2,3-diol 1,2-dioxygenase (298 aa).

2 consecutive VOC domains span residues 5–119 (SLGY…IYYG) and 143–264 (GLGH…YGWS). Fe cation contacts are provided by H146, H210, and E260.

This sequence belongs to the extradiol ring-cleavage dioxygenase family. As to quaternary structure, homooctamer. The enzyme is composed of two planar tetramers rotated at 45 degrees relative to each other, with a channel in the middle. It depends on Fe(2+) as a cofactor.

It carries out the reaction biphenyl-2,3-diol + O2 = 2-hydroxy-6-oxo-6-phenylhexa-2,4-dienoate + H(+). It participates in xenobiotic degradation; biphenyl degradation; 2-hydroxy-2,4-pentadienoate and benzoate from biphenyl: step 3/4. Its function is as follows. Shows a preference for catechols with groups immediately adjacent to the hydroxyl substituents. This chain is Biphenyl-2,3-diol 1,2-dioxygenase (bphC), found in Paraburkholderia xenovorans (strain LB400).